The following is a 256-amino-acid chain: Pimeloyl-[acyl-carrier protein] methyl ester esterase (256 aa).

One can recognise an AB hydrolase-1 domain in the interval 15-242 (HLVLLHGWGL…AAHAPFISHP (228 aa)). Substrate contacts are provided by residues W22, 82–83 (SL), and 143–147 (FLALQ). Catalysis depends on S82, which acts as the Nucleophile. Residues D207 and H235 contribute to the active site. Substrate is bound at residue H235.

It belongs to the AB hydrolase superfamily. Carboxylesterase BioH family. As to quaternary structure, monomer.

Its subcellular location is the cytoplasm. It catalyses the reaction 6-carboxyhexanoyl-[ACP] methyl ester + H2O = 6-carboxyhexanoyl-[ACP] + methanol + H(+). It participates in cofactor biosynthesis; biotin biosynthesis. The physiological role of BioH is to remove the methyl group introduced by BioC when the pimeloyl moiety is complete. It allows to synthesize pimeloyl-ACP via the fatty acid synthetic pathway through the hydrolysis of the ester bonds of pimeloyl-ACP esters. The chain is Pimeloyl-[acyl-carrier protein] methyl ester esterase from Escherichia coli O6:H1 (strain CFT073 / ATCC 700928 / UPEC).